The following is a 327-amino-acid chain: Aspartate--ammonia ligase (327 aa).

The protein belongs to the class-II aminoacyl-tRNA synthetase family. AsnA subfamily.

It is found in the cytoplasm. The enzyme catalyses L-aspartate + NH4(+) + ATP = L-asparagine + AMP + diphosphate + H(+). The protein operates within amino-acid biosynthesis; L-asparagine biosynthesis; L-asparagine from L-aspartate (ammonia route): step 1/1. This is Aspartate--ammonia ligase from Fusobacterium nucleatum subsp. nucleatum (strain ATCC 25586 / DSM 15643 / BCRC 10681 / CIP 101130 / JCM 8532 / KCTC 2640 / LMG 13131 / VPI 4355).